Consider the following 1136-residue polypeptide: Nitric oxide synthase, inducible (1136 aa).

Residues C107 and C112 each contribute to the Zn(2+) site. C197 contacts heme b. The L-arginine site is built by Q260, W369, Y370, and E374. Residues R378, V459, W460, and F473 each contribute to the (6R)-L-erythro-5,6,7,8-tetrahydrobiopterin site. Y488 lines the heme b pocket. Positions 512–532 (LSILAKAVLLASLLLQKTMAA) are calmodulin-binding. A Flavodoxin-like domain is found at 536-674 (VTVIYATETG…AFRTWAVTAF (139 aa)). 11 residues coordinate FMN: T542, E543, T544, K546, S547, S588, T589, S625, C632, E658, and Q662. The region spanning 727 to 967 (KNVIPMKLKF…VRSADGFRLP (241 aa)) is the FAD-binding FR-type domain. Residue R747 coordinates NADP(+). The FAD site is built by H769, R903, Y905, S906, T921, A923, Y927, V940, C941, and S942. NADP(+) contacts are provided by T981, R1014, S1043, R1044, K1050, Y1052, Q1054, and D1087.

The protein belongs to the NOS family. Homodimer. Heme b is required as a cofactor. Requires FAD as cofactor. The cofactor is FMN. It depends on (6R)-L-erythro-5,6,7,8-tetrahydrobiopterin as a cofactor.

Its subcellular location is the cytoplasm. It is found in the cytosol. It catalyses the reaction 2 L-arginine + 3 NADPH + 4 O2 + H(+) = 2 L-citrulline + 2 nitric oxide + 3 NADP(+) + 4 H2O. With respect to regulation, not stimulated by calcium/calmodulin. Produces nitric oxide (NO) which is a messenger molecule with diverse functions throughout the body. NO may serve as both a paracrine and autocrine signal for modulating osteoclast bone resorption. Also has nitrosylase activity and mediates cysteine S-nitrosylation of cytoplasmic target proteins such COX2. The sequence is that of Nitric oxide synthase, inducible (NOS2) from Gallus gallus (Chicken).